We begin with the raw amino-acid sequence, 455 residues long: Cysteine--tRNA ligase (455 aa).

Cys-28 is a Zn(2+) binding site. The 'HIGH' region signature appears at 30 to 40 (MTVYDYCHLGH). Residues Cys-209, His-234, and Glu-238 each coordinate Zn(2+). Residues 266–270 (KMSKS) carry the 'KMSKS' region motif. Lys-269 contacts ATP.

Belongs to the class-I aminoacyl-tRNA synthetase family. As to quaternary structure, monomer. Zn(2+) serves as cofactor.

The protein resides in the cytoplasm. It catalyses the reaction tRNA(Cys) + L-cysteine + ATP = L-cysteinyl-tRNA(Cys) + AMP + diphosphate. This chain is Cysteine--tRNA ligase, found in Methylobacillus flagellatus (strain ATCC 51484 / DSM 6875 / VKM B-1610 / KT).